Consider the following 255-residue polypeptide: Type III pantothenate kinase (255 aa).

6–13 (DIGNSNID) provides a ligand contact to ATP. Position 107-110 (107-110 (GADL)) interacts with substrate. Asp-109 acts as the Proton acceptor in catalysis. Asp-129 serves as a coordination point for K(+). Thr-132 lines the ATP pocket. Thr-183 contacts substrate.

The protein belongs to the type III pantothenate kinase family. As to quaternary structure, homodimer. NH4(+) is required as a cofactor. The cofactor is K(+).

It is found in the cytoplasm. It catalyses the reaction (R)-pantothenate + ATP = (R)-4'-phosphopantothenate + ADP + H(+). Its pathway is cofactor biosynthesis; coenzyme A biosynthesis; CoA from (R)-pantothenate: step 1/5. Its function is as follows. Catalyzes the phosphorylation of pantothenate (Pan), the first step in CoA biosynthesis. This Dictyoglomus turgidum (strain DSM 6724 / Z-1310) protein is Type III pantothenate kinase.